We begin with the raw amino-acid sequence, 308 residues long: ADP-L-glycero-D-manno-heptose-6-epimerase (308 aa).

NADP(+) is bound by residues Phe-10–Ile-11, Asp-31–Asn-32, Lys-38, Lys-53, Glu-75–Ser-79, and Asn-92. Residue Tyr-139 is the Proton acceptor of the active site. Lys-143 lines the NADP(+) pocket. Asn-168 lines the substrate pocket. Positions 169 and 177 each coordinate NADP(+). Catalysis depends on Lys-177, which acts as the Proton acceptor. Substrate-binding positions include Ser-179, His-186, Phe-200–Ser-203, Arg-208, and Tyr-271.

The protein belongs to the NAD(P)-dependent epimerase/dehydratase family. HldD subfamily. As to quaternary structure, homopentamer. NADP(+) is required as a cofactor.

The enzyme catalyses ADP-D-glycero-beta-D-manno-heptose = ADP-L-glycero-beta-D-manno-heptose. Its pathway is nucleotide-sugar biosynthesis; ADP-L-glycero-beta-D-manno-heptose biosynthesis; ADP-L-glycero-beta-D-manno-heptose from D-glycero-beta-D-manno-heptose 7-phosphate: step 4/4. It functions in the pathway bacterial outer membrane biogenesis; LOS core biosynthesis. In terms of biological role, catalyzes the interconversion between ADP-D-glycero-beta-D-manno-heptose and ADP-L-glycero-beta-D-manno-heptose via an epimerization at carbon 6 of the heptose. The chain is ADP-L-glycero-D-manno-heptose-6-epimerase from Haemophilus influenzae (strain ATCC 51907 / DSM 11121 / KW20 / Rd).